The sequence spans 128 residues: Cholecystokinin B (128 aa).

An N-terminal signal peptide occupies residues 1–20 (MCSGVCICLLLAMLSASSKA). A propeptide spanning residues 21–108 (HQATGSLGED…FDQSHRINDR (88 aa)) is cleaved from the precursor. The interval 47-67 (YARASSAGQKKSFQRTDGDQR) is disordered. Tyrosine 110 carries the sulfotyrosine modification. Phenylalanine 116 is subject to Phenylalanine amide. A propeptide spanning residues 120 to 128 (SAEEYEYSS) is cleaved from the precursor.

Belongs to the gastrin/cholecystokinin family. In terms of processing, the precursor is cleaved by proteases to produce a number of active cholecystokinins. Brain and gastrointestinal tract.

It localises to the secreted. In Xenopus laevis (African clawed frog), this protein is Cholecystokinin B (cck-b).